A 450-amino-acid polypeptide reads, in one-letter code: Molybdate-anion transporter (450 aa).

12 helical membrane-spanning segments follow: residues 1–21, 43–63, 79–99, 128–148, 176–196, 198–218, 249–269, 278–298, 311–331, 344–364, 376–396, and 409–429; these read MLVT…GLEL, LDFY…APYL, ILYV…SSLV, FVLL…FSAF, FWNH…ACWM, LGPV…GALA, VLLL…FVFL, GAPL…GSSL, PMHL…MLTF, FIAF…MSFL, GVLN…LLVL, and FSIC…LFTV.

It belongs to the major facilitator superfamily.

It localises to the cell membrane. Its function is as follows. Mediates high-affinity intracellular uptake of the rare oligo-element molybdenum. This Bos taurus (Bovine) protein is Molybdate-anion transporter (MFSD5).